A 530-amino-acid chain; its full sequence is Phosphoenolpyruvate carboxykinase (ATP) (530 aa).

Residues arginine 58, tyrosine 195, and lysine 201 each contribute to the substrate site. Residues lysine 201, histidine 220, and 236 to 244 contribute to the ATP site; that span reads GLSGTGKTT. 2 residues coordinate Mn(2+): lysine 201 and histidine 220. A Mn(2+)-binding site is contributed by aspartate 257. ATP contacts are provided by residues glutamate 285, arginine 321, 440-441, and threonine 446; that span reads RI. Arginine 321 serves as a coordination point for substrate.

The protein belongs to the phosphoenolpyruvate carboxykinase (ATP) family. Mn(2+) is required as a cofactor.

It localises to the cytoplasm. It carries out the reaction oxaloacetate + ATP = phosphoenolpyruvate + ADP + CO2. It functions in the pathway carbohydrate biosynthesis; gluconeogenesis. In terms of biological role, involved in the gluconeogenesis. Catalyzes the conversion of oxaloacetate (OAA) to phosphoenolpyruvate (PEP) through direct phosphoryl transfer between the nucleoside triphosphate and OAA. In Staphylococcus aureus (strain MRSA252), this protein is Phosphoenolpyruvate carboxykinase (ATP).